Here is a 510-residue protein sequence, read N- to C-terminus: GTPase Der (510 aa).

2 EngA-type G domains span residues 3–166 (PVVA…ATAL) and 220–393 (IKIA…ACAT). GTP contacts are provided by residues 9–16 (GRPNVGKS), 56–60 (DTGGI), 118–121 (NKTD), 226–233 (GRPNVGKS), 273–277 (DTAGV), and 338–341 (NKWD). The 85-residue stretch at 394–478 (QKTSTSMLTR…PIRIQFQEGN (85 aa)) folds into the KH-like domain.

It belongs to the TRAFAC class TrmE-Era-EngA-EngB-Septin-like GTPase superfamily. EngA (Der) GTPase family. As to quaternary structure, associates with the 50S ribosomal subunit.

In terms of biological role, GTPase that plays an essential role in the late steps of ribosome biogenesis. This is GTPase Der from Haemophilus ducreyi (strain 35000HP / ATCC 700724).